The sequence spans 199 residues: Nucleoid occlusion factor SlmA (199 aa).

One can recognise an HTH tetR-type domain in the interval Arg10–Leu71. The segment at residues Thr34–Phe53 is a DNA-binding region (H-T-H motif). The stretch at Asn120–Val140 forms a coiled coil.

The protein belongs to the nucleoid occlusion factor SlmA family. Homodimer. Interacts with FtsZ.

Its subcellular location is the cytoplasm. The protein resides in the nucleoid. Its function is as follows. Required for nucleoid occlusion (NO) phenomenon, which prevents Z-ring formation and cell division over the nucleoid. Acts as a DNA-associated cell division inhibitor that binds simultaneously chromosomal DNA and FtsZ, and disrupts the assembly of FtsZ polymers. SlmA-DNA-binding sequences (SBS) are dispersed on non-Ter regions of the chromosome, preventing FtsZ polymerization at these regions. The protein is Nucleoid occlusion factor SlmA of Photorhabdus laumondii subsp. laumondii (strain DSM 15139 / CIP 105565 / TT01) (Photorhabdus luminescens subsp. laumondii).